The following is a 252-amino-acid chain: Large ribosomal subunit protein uL4 (252 aa).

The protein belongs to the universal ribosomal protein uL4 family. Part of the 50S ribosomal subunit.

One of the primary rRNA binding proteins, this protein initially binds near the 5'-end of the 23S rRNA. It is important during the early stages of 50S assembly. It makes multiple contacts with different domains of the 23S rRNA in the assembled 50S subunit and ribosome. Its function is as follows. Forms part of the polypeptide exit tunnel. The chain is Large ribosomal subunit protein uL4 from Methanocaldococcus jannaschii (strain ATCC 43067 / DSM 2661 / JAL-1 / JCM 10045 / NBRC 100440) (Methanococcus jannaschii).